The sequence spans 391 residues: uncharacterized protein (391 aa).

The segment covering Ser-118 to Pro-149 has biased composition (low complexity). 4 disordered regions span residues Ser-118–Pro-162, Gln-184–Asn-258, Asn-272–Asn-327, and Leu-337–Asn-356. The span at Gln-150 to Pro-162 shows a compositional bias: basic residues. Over residues Asn-186 to Asn-211 the composition is skewed to low complexity. Residues Asp-212–Thr-223 show a composition bias toward polar residues. The segment covering Asn-244–Pro-256 has biased composition (low complexity).

This is an uncharacterized protein from Dictyostelium discoideum (Social amoeba).